Reading from the N-terminus, the 205-residue chain is Quinone-oxidoreductase QR2 (205 aa).

A Flavodoxin-like domain is found at Val5–Tyr192. Residues Ser11–His15, Ile112–Gly165, and His136 each bind FMN. Residue Tyr13 participates in NAD(+) binding.

This sequence belongs to the WrbA family. It depends on FMN as a cofactor.

The enzyme catalyses a quinone + NADH + H(+) = a quinol + NAD(+). It catalyses the reaction a quinone + NADPH + H(+) = a quinol + NADP(+). Inhibited by dicumarol. Functionally, NAD(P)H:quinone oxidoreductase reducing quinones by a two-electron transfer mechanism. Can use either NADPH or NADH as electron donor. Can use menadione, 5-hydroxy-1,4-naphthoquinone (juglone) and 2,6-dimethoxy-p-benzoquinone (DMBQ) as substrates. Mitigates the toxicity of exogenous quinones in the rhizosphere. In Triphysaria versicolor (Yellow owl's clover), this protein is Quinone-oxidoreductase QR2.